A 452-amino-acid polypeptide reads, in one-letter code: Phenylalanine-4-hydroxylase (452 aa).

S16 is subject to Phosphoserine; by PKA. In terms of domain architecture, ACT spans 36-114 (SLIFSLKEEV…TVHELSRDKK (79 aa)). The Fe cation site is built by H285, H290, and E330.

This sequence belongs to the biopterin-dependent aromatic amino acid hydroxylase family. As to quaternary structure, homodimer and homotetramer. Requires Fe(2+) as cofactor. In terms of processing, phosphorylation at Ser-16 increases basal activity and facilitates activation by the substrate phenylalanine.

The catalysed reaction is (6R)-L-erythro-5,6,7,8-tetrahydrobiopterin + L-phenylalanine + O2 = (4aS,6R)-4a-hydroxy-L-erythro-5,6,7,8-tetrahydrobiopterin + L-tyrosine. It functions in the pathway amino-acid degradation; L-phenylalanine degradation; acetoacetate and fumarate from L-phenylalanine: step 1/6. N-terminal region of PAH is thought to contain allosteric binding sites for phenylalanine and to constitute an 'inhibitory' domain that regulates the activity of a catalytic domain in the C-terminal portion of the molecule. Catalyzes the hydroxylation of L-phenylalanine to L-tyrosine. The protein is Phenylalanine-4-hydroxylase (PAH) of Homo sapiens (Human).